Reading from the N-terminus, the 487-residue chain is GTPase Der (487 aa).

EngA-type G domains are found at residues 2–164 and 203–374; these read KTIA…SLAK and IAVG…QRFA. Residues 8–15, 55–59, 116–119, 209–216, 256–260, and 320–323 each bind GTP; these read GKPNVGKS, DTGGI, NKVD, GRVNVGKS, DTAGI, and NKWD. One can recognise a KH-like domain in the interval 375-459; that stretch reads YRIPTSALND…PILLSVKGKN (85 aa). Residues 459–480 are compositionally biased toward basic and acidic residues; that stretch reads NAKDEENTSAKKESPSKVSHRE. The tract at residues 459 to 487 is disordered; it reads NAKDEENTSAKKESPSKVSHRESKNRRFV.

Belongs to the TRAFAC class TrmE-Era-EngA-EngB-Septin-like GTPase superfamily. EngA (Der) GTPase family. Associates with the 50S ribosomal subunit.

Functionally, GTPase that plays an essential role in the late steps of ribosome biogenesis. This Helicobacter hepaticus (strain ATCC 51449 / 3B1) protein is GTPase Der.